Here is a 323-residue protein sequence, read N- to C-terminus: tRNA U34 carboxymethyltransferase (323 aa).

Carboxy-S-adenosyl-L-methionine-binding positions include Lys-91, Trp-105, Lys-110, Gly-130, 152-154 (DPT), 181-182 (IE), Met-196, Tyr-200, and Arg-315.

It belongs to the class I-like SAM-binding methyltransferase superfamily. CmoB family. As to quaternary structure, homotetramer.

It carries out the reaction carboxy-S-adenosyl-L-methionine + 5-hydroxyuridine(34) in tRNA = 5-carboxymethoxyuridine(34) in tRNA + S-adenosyl-L-homocysteine + H(+). Catalyzes carboxymethyl transfer from carboxy-S-adenosyl-L-methionine (Cx-SAM) to 5-hydroxyuridine (ho5U) to form 5-carboxymethoxyuridine (cmo5U) at position 34 in tRNAs. This Escherichia coli O6:H1 (strain CFT073 / ATCC 700928 / UPEC) protein is tRNA U34 carboxymethyltransferase.